The sequence spans 179 residues: Ubiquitin-conjugating enzyme E2 C (179 aa).

Residues 1 to 31 (MASQNVDPAAASSVASRKGQESGTSAARGSV) form a disordered region. The UBC core domain maps to 30 to 179 (SVGKRLQQEL…YQKQVREKEI (150 aa)). Catalysis depends on C114, which acts as the Glycyl thioester intermediate.

It belongs to the ubiquitin-conjugating enzyme family. As to quaternary structure, component of the APC/C complex. In terms of processing, autoubiquitinated by the APC/C complex, leading to its degradation by the proteasome.

It carries out the reaction S-ubiquitinyl-[E1 ubiquitin-activating enzyme]-L-cysteine + [E2 ubiquitin-conjugating enzyme]-L-cysteine = [E1 ubiquitin-activating enzyme]-L-cysteine + S-ubiquitinyl-[E2 ubiquitin-conjugating enzyme]-L-cysteine.. The enzyme catalyses S-ubiquitinyl-[E1 ubiquitin-activating enzyme]-L-cysteine + [acceptor protein]-L-lysine = [E1 ubiquitin-activating enzyme]-L-cysteine + N(6)-monoubiquitinyl-[acceptor protein]-L-lysine.. It functions in the pathway protein modification; protein ubiquitination. Its function is as follows. Catalyzes the covalent attachment of ubiquitin to other proteins. Acts as an essential factor of the anaphase promoting complex/cyclosome (APC/C), a cell cycle-regulated ubiquitin ligase that controls progression through mitosis. Acts by initiating 'Lys-11'-linked polyubiquitin chains on APC/C substrates, leading to the degradation of APC/C substrates by the proteasome and promoting mitotic exit. This Xenopus laevis (African clawed frog) protein is Ubiquitin-conjugating enzyme E2 C (ube2c).